Reading from the N-terminus, the 469-residue chain is IME2-dependent-signaling protein (469 aa).

Residue methionine 1 is modified to N-acetylmethionine. Threonine 13 bears the Phosphothreonine mark. Disordered stretches follow at residues 22–55 (KSWSESQDNPLLLNFNNSPIGTPTDRYSPEPATM), 67–92 (ARGSTQQQQRLYGSSQTREKSDQQQQ), and 117–143 (DLTLGSPEPSERASPIRQPSVDVPPLT). Phosphoserine is present on residues serine 23, serine 27, and serine 39. Polar residues-rich tracts occupy residues 25–42 (SESQDNPLLLNFNNSPIG) and 67–82 (ARGSTQQQQRLYGSSQ). Serine 122, serine 130, serine 136, serine 147, and serine 148 each carry phosphoserine.

In terms of biological role, seems to act indirectly to modify IME2 activity, thus permitting IME2 to carry out later meiotic functions. The polypeptide is IME2-dependent-signaling protein (IDS2) (Saccharomyces cerevisiae (strain ATCC 204508 / S288c) (Baker's yeast)).